Here is a 285-residue protein sequence, read N- to C-terminus: Sulfur carrier protein TtuD (285 aa).

Rhodanese domains follow at residues 20 to 127 and 161 to 281; these read EDPK…PLTT and KEGK…VPIA. A Cysteine persulfide modification is found at C240.

Cys-240 can accept a sulfur atom as persulfide forms from cysteine desulfurases IscS and SufS.

It participates in tRNA modification. Its function is as follows. Required for the efficient 2-thiolation of 5-methyluridine residue at position 54 in the T loop of tRNAs, leading to 5-methyl-2-thiouridine (m(5)s(2)U or s(2)T). TtuD is a sulfur carrier protein that has a role to direct sulfur flow from cysteine desulfurases to m(5)s(2)U synthesis in vivo. It enhances the cysteine desulfurase activity of IscS and SufS, as well as the formation of thiocarboxylated TtuB (TtuB-COSH) in the presence of these desulfurases. This is Sulfur carrier protein TtuD from Thermus thermophilus (strain ATCC BAA-163 / DSM 7039 / HB27).